The following is a 493-amino-acid chain: Polyamine aminopropyltransferase 2 (493 aa).

The next 7 membrane-spanning stretches (helical) occupy residues 9–29 (LCIFFTGFAGIVAEYSLATLA), 32–52 (LLGNAVLQWSVVISIFLLSMG), 68–88 (LAFVLAELFLSLLVPFSVPIA), 101–121 (VIYGLSFVIGSLIGLEIPLAV), 137–157 (VLEKDYLGSVPAGLLYAYLFL), 161–181 (GLPLTAILAGFFNLISAFLLV), and 188–208 (KFLKFLAIFTFFLLATYAVGH). Residues 187-448 (KKFLKFLAIF…PLNFENFELK (262 aa)) are spermidine synthase. One can recognise a PABS domain in the interval 202 to 437 (ATYAVGHKRI…GEWGMVIGSK (236 aa)). Q233 contacts S-methyl-5'-thioadenosine. The spermidine site is built by H263 and D287. S-methyl-5'-thioadenosine contacts are provided by residues D306 and 340 to 341 (DA). The active-site Proton acceptor is D358.

It belongs to the spermidine/spermine synthase family. Homodimer or homotetramer.

The protein localises to the cell membrane. The enzyme catalyses S-adenosyl 3-(methylsulfanyl)propylamine + putrescine = S-methyl-5'-thioadenosine + spermidine + H(+). It functions in the pathway amine and polyamine biosynthesis; spermidine biosynthesis; spermidine from putrescine: step 1/1. In terms of biological role, catalyzes the irreversible transfer of a propylamine group from the amino donor S-adenosylmethioninamine (decarboxy-AdoMet) to putrescine (1,4-diaminobutane) to yield spermidine. The protein is Polyamine aminopropyltransferase 2 of Aquifex aeolicus (strain VF5).